The sequence spans 451 residues: Eukaryotic translation initiation factor 3 subunit E (451 aa).

In terms of domain architecture, PCI spans 256–425 (TDLFFSPAYI…GTVIMNHPPQ (170 aa)).

This sequence belongs to the eIF-3 subunit E family. Component of the eukaryotic translation initiation factor 3 (eIF-3) complex.

The protein localises to the cytoplasm. Its function is as follows. Component of the eukaryotic translation initiation factor 3 (eIF-3) complex, which is involved in protein synthesis of a specialized repertoire of mRNAs and, together with other initiation factors, stimulates binding of mRNA and methionyl-tRNAi to the 40S ribosome. The eIF-3 complex specifically targets and initiates translation of a subset of mRNAs involved in cell proliferation. The protein is Eukaryotic translation initiation factor 3 subunit E (int6) of Aspergillus oryzae (strain ATCC 42149 / RIB 40) (Yellow koji mold).